A 453-amino-acid chain; its full sequence is Bifunctional protein GlmU (453 aa).

The tract at residues 1–226 (MTLDVVILAA…ALEVEGVNNR (226 aa)) is pyrophosphorylase. Residues 8 to 11 (LAAG), Lys-22, Gln-73, 78 to 79 (GT), 99 to 101 (YGD), Gly-136, Glu-151, Asn-166, and Asn-224 contribute to the UDP-N-acetyl-alpha-D-glucosamine site. Asp-101 is a Mg(2+) binding site. A Mg(2+)-binding site is contributed by Asn-224. Residues 227-247 (SQMAALERAYQRDRAERLLTE) are linker. Positions 248–453 (GVALADPARF…AGWKRPRKSS (206 aa)) are N-acetyltransferase. UDP-N-acetyl-alpha-D-glucosamine is bound by residues Arg-330 and Lys-348. His-360 functions as the Proton acceptor in the catalytic mechanism. 2 residues coordinate UDP-N-acetyl-alpha-D-glucosamine: Tyr-363 and Asn-374. Residues Ala-377, 383–384 (NY), Ser-402, Ala-420, and Arg-437 contribute to the acetyl-CoA site.

In the N-terminal section; belongs to the N-acetylglucosamine-1-phosphate uridyltransferase family. This sequence in the C-terminal section; belongs to the transferase hexapeptide repeat family. As to quaternary structure, homotrimer. The cofactor is Mg(2+).

It is found in the cytoplasm. The catalysed reaction is alpha-D-glucosamine 1-phosphate + acetyl-CoA = N-acetyl-alpha-D-glucosamine 1-phosphate + CoA + H(+). It catalyses the reaction N-acetyl-alpha-D-glucosamine 1-phosphate + UTP + H(+) = UDP-N-acetyl-alpha-D-glucosamine + diphosphate. It participates in nucleotide-sugar biosynthesis; UDP-N-acetyl-alpha-D-glucosamine biosynthesis; N-acetyl-alpha-D-glucosamine 1-phosphate from alpha-D-glucosamine 6-phosphate (route II): step 2/2. It functions in the pathway nucleotide-sugar biosynthesis; UDP-N-acetyl-alpha-D-glucosamine biosynthesis; UDP-N-acetyl-alpha-D-glucosamine from N-acetyl-alpha-D-glucosamine 1-phosphate: step 1/1. The protein operates within bacterial outer membrane biogenesis; LPS lipid A biosynthesis. Functionally, catalyzes the last two sequential reactions in the de novo biosynthetic pathway for UDP-N-acetylglucosamine (UDP-GlcNAc). The C-terminal domain catalyzes the transfer of acetyl group from acetyl coenzyme A to glucosamine-1-phosphate (GlcN-1-P) to produce N-acetylglucosamine-1-phosphate (GlcNAc-1-P), which is converted into UDP-GlcNAc by the transfer of uridine 5-monophosphate (from uridine 5-triphosphate), a reaction catalyzed by the N-terminal domain. This Chromohalobacter salexigens (strain ATCC BAA-138 / DSM 3043 / CIP 106854 / NCIMB 13768 / 1H11) protein is Bifunctional protein GlmU.